A 399-amino-acid chain; its full sequence is Myb-related transcription factor, partner of profilin (399 aa).

The 73-residue stretch at 12-84 folds into the Myb-like domain; it reads TTRLRKPRFS…EVQKRWNDFK (73 aa). The Nuclear localization signal signature appears at 83-86; the sequence is FKRR. Disordered stretches follow at residues 87–108, 127–261, 297–332, and 358–399; these read TKEK…AEDA, PGAG…PSLD, LLPG…PKVE, and APRS…WKSP. Residues 127–136 are compositionally biased toward low complexity; sequence PGAGAGAEEP. The segment covering 137–149 has biased composition (pro residues); that stretch reads PAAPSSQPPPPSA. Positions 156-170 are enriched in basic and acidic residues; it reads LSEDRREDRRADTSA. Pro residues-rich tracts occupy residues 219–252, 305–329, and 366–377; these read SPPP…PPPT, SLPP…PPAP, and PRPPPAPLPPHD. Over residues 381 to 399 the composition is skewed to basic residues; it reads HKRRKGFPTRKRRGRWKSP. 2 short sequence motifs (nuclear localization signal) span residues 382 to 385 and 390 to 393; these read KRRK and RKRR.

Interacts with PFN1. Homodimer and heterodimer with PFN1.

The protein localises to the nucleus. Functionally, transcriptional repressor; DNA-binding protein that specifically recognizes the core sequence 5'-YAAC[GT]G-3'. Dimerization with PFN1 reduces its DNA-binding capacity. This chain is Myb-related transcription factor, partner of profilin (MYPOP), found in Homo sapiens (Human).